Reading from the N-terminus, the 420-residue chain is MRCAPPGLLLAQLHACIFWSGLWPAGCQSPPAAWRQRIQWENNGQVYSLLSQGAQYQPPRRRQGAEPASSPVLLLRGNGSVPRAAAAAAARPQPEPQPQAQPQPRPRSSRRQPLGRRHWFQAGYRAPSGSARPAPRRRPRGRRSRRRERAERRRAAAPSGLRPGREDVMVGDDPYSPYKYTDDNPYYNYYDTYERPRQGSRYRPGYGTGYFQYGLPDLVPDPYYIQASTYVQRMSMYNLRCAAEENCLASSAYRADVRDYDNRVLLRFPQRVKNQGTSDFLPSRPRYSWEWHSCHQHYHSMDEFSHYDLLDASSHRKVAEGHKASFCLEDTSCDYGYYRRYACTAHTQGLSPGCYDTYNADIDCQWIDITDVKPGNYILKVSVNPSYLVPESDYSNNIVRCDIRYTGHHAYASGCTISPY.

A signal peptide spans 1–27; sequence MRCAPPGLLLAQLHACIFWSGLWPAGC. Residues 28–171 constitute a propeptide, removed by BMP1; sequence QSPPAAWRQR…RPGREDVMVG (144 aa). The tract at residues 54 to 177 is disordered; sequence AQYQPPRRRQ…VMVGDDPYSP (124 aa). Asn-78 carries N-linked (GlcNAc...) asparagine glycosylation. Over residues 82–92 the composition is skewed to low complexity; it reads PRAAAAAAARP. Residues 93-105 show a composition bias toward pro residues; it reads QPEPQPQAQPQPR. 2 stretches are compositionally biased toward basic residues: residues 107-119 and 134-147; these read RSSRRQPLGRRHW and APRRRPRGRRSRRR. The residue at position 190 (Tyr-190) is a Sulfotyrosine. The segment at 216 to 420 is lysyl-oxidase like; the sequence is PDLVPDPYYI…YASGCTISPY (205 aa). Disulfide bonds link Cys-241-Cys-247, Cys-294-Cys-343, Cys-327-Cys-333, Cys-354-Cys-364, and Cys-401-Cys-415. The Cu cation site is built by His-295, His-297, and His-299. A cross-link (lysine tyrosylquinone (Lys-Tyr)) is located at residues 323–358; that stretch reads KASFCLEDTSCDYGYYRRYACTAHTQGLSPGCYDTY. Position 358 is a 2',4',5'-topaquinone (Tyr-358).

It belongs to the lysyl oxidase family. Cu cation serves as cofactor. The cofactor is lysine tyrosylquinone residue. The lysine tyrosylquinone cross-link (LTQ) is generated by condensation of the epsilon-amino group of a lysine with a topaquinone produced by oxidation of tyrosine. Post-translationally, proteolytically cleaved by BMP1 which removes the propeptide. Also proteolytically cleaved by ADAMTS2 and ADAMTS14, but not by ADAMTS3, at an additional cleavage site downstream of the BMP1 cleavage site. The propeptide plays a role in directing the deposition of this enzyme to elastic fibers, via interaction with tropoelastin. Cleavage by BMP1 to remove the propeptide does not increase enzymatic activity but increases binding to collagen. Cleavage by ADAMTS2 produces a form with reduced collagen-binding activity. In terms of processing, sulfated at Tyr-190 and also at either Tyr-186 or Tyr-187 which enhances binding to collagen.

It is found in the secreted. It localises to the extracellular space. The enzyme catalyses L-lysyl-[protein] + O2 + H2O = (S)-2-amino-6-oxohexanoyl-[protein] + H2O2 + NH4(+). Its function is as follows. Responsible for the post-translational oxidative deamination of peptidyl lysine residues in precursors to fibrous collagen and elastin. Functionally, in addition to cross linking of extracellular matrix proteins, it may have a direct role in tumor suppression. This chain is Protein-lysine 6-oxidase (LOX), found in Gallus gallus (Chicken).